We begin with the raw amino-acid sequence, 623 residues long: AM-toxin biosynthesis protein 12-2 (623 aa).

Positions 110 to 129 (TIPGTSQAKNTEPDHQASGL) are disordered.

The protein operates within mycotoxin biosynthesis. Part of the gene clusters that mediate the biosynthesis of AM-toxins, host-selective toxins (HSTs) causing Alternaria blotch on apple, a worldwide distributed disease. AM-toxins are cyclic depsipeptides containing the 3 residues 2-hydroxy-isovaleric acid (2-HIV), dehydroalanine, L-alanine which are common for all 3 AM-toxins I to III. The fourth precursor is L-alpha-amino-methoxyphenyl-valeric acid (L-Amv) for AM-toxin I, L-alpha-amino-phenyl-valeric acid (L-Apv) for AM-toxin II, and L-alpha-amino-hydroxyphenyl-valeric acid (L-Ahv) for AM-toxin III. AM-toxins have two target sites for affecting susceptible apple cells; they cause invagination of the plasma membrane and electrolyte loss and chloroplast disorganization. The non-ribosomal peptide synthetase AMT1 contains 4 catalytic modules and is responsible for activation of each residue in AM-toxin. The aldo-keto reductase AMT2 catalyzes the conversion of 2-keto-isovaleric acid (2-KIV) to 2-hydroxy-isovaleric acid (2-HIV), one of the precursor residues incorporated by AMT1 during AM-toxin biosynthesis, by reduction of its ketone to an alcohol. The cytochrome P450 monooxygenase AMT3 and the thioesterase AMT4 are also important for AM-toxin production, but their exact function within the AM-toxin biosynthesis are not known yet. Up to 21 proteins (including AMT1 to AMT4) are predicted to be involved in AM-toxin biosynthesis since their expression ishighly up-regulated in AM-toxin-producing cultures. The polypeptide is AM-toxin biosynthesis protein 12-2 (Alternaria alternata (Alternaria rot fungus)).